The sequence spans 540 residues: Chaperonin GroEL (540 aa).

Residues 29–32, 86–90, G413, 476–478, and D492 each bind ATP; these read TLGP, DGTTT, and NAA.

Belongs to the chaperonin (HSP60) family. Forms a cylinder of 14 subunits composed of two heptameric rings stacked back-to-back. Interacts with the co-chaperonin GroES.

Its subcellular location is the cytoplasm. The enzyme catalyses ATP + H2O + a folded polypeptide = ADP + phosphate + an unfolded polypeptide.. Functionally, together with its co-chaperonin GroES, plays an essential role in assisting protein folding. The GroEL-GroES system forms a nano-cage that allows encapsulation of the non-native substrate proteins and provides a physical environment optimized to promote and accelerate protein folding. The polypeptide is Chaperonin GroEL (Tsukamurella paurometabola (Corynebacterium paurometabolum)).